Here is a 640-residue protein sequence, read N- to C-terminus: Envelope glycoprotein (640 aa).

The N-terminal stretch at 1–32 is a signal peptide; sequence MEGPAFSKPLKDKINPWGPLIILGILIRAGVS. Topologically, residues 33-582 are extracellular; the sequence is VQHDSPHQVF…FNKSPWFTTL (550 aa). 2 N-linked (GlcNAc...) asparagine; by host glycosylation sites follow: Asn43 and Asn58. 2 disulfides stabilise this stretch: Cys109–Cys126 and Cys118–Cys131. Asn297 carries an N-linked (GlcNAc...) asparagine; by host glycan. 6 cysteine pairs are disulfide-bonded: Cys307–Cys310, Cys307–Cys535, Cys337–Cys391, Cys356–Cys368, Cys398–Cys411, and Cys527–Cys534. The short motif at 307 to 310 is the CXXC element; the sequence is CWLC. N-linked (GlcNAc...) asparagine; by host glycans are attached at residues Asn329 and Asn336. Asn369 is a glycosylation site (N-linked (GlcNAc...) asparagine; by host). Residues 444-464 form a fusion peptide region; the sequence is VSLTLALLLGGLTMGGIAAGV. Residues 473 to 509 are a coiled coil; it reads ATQQFQQLQAAMHDDLKEVEKSITNLEKSLTSLSEVV. The tract at residues 510-526 is immunosuppression; the sequence is LQNRRGLDLLFLKEGGL. A CX6CC motif is present at residues 527–535; the sequence is CAALKEECC. A helical membrane pass occupies residues 583-603; sequence ISTIMGPLIILLLILLFGPWI. At 604-640 the chain is on the cytoplasmic side; sequence LNRLVQFIKDRISVVQALVLTQQYHQLKTIGDCKSRE. The short motif at 627–630 is the YXXL motif; contains endocytosis signal element; sequence YHQL.

In terms of assembly, the mature envelope protein (Env) consists of a trimer of SU-TM heterodimers attached by a labile interchain disulfide bond. Specific enzymatic cleavages in vivo yield mature proteins. Envelope glycoproteins are synthesized as an inactive precursor that is N-glycosylated and processed likely by host cell furin or by a furin-like protease in the Golgi to yield the mature SU and TM proteins. The cleavage site between SU and TM requires the minimal sequence [KR]-X-[KR]-R. The R-peptide is released from the C-terminus of the cytoplasmic tail of the TM protein upon particle formation as a result of proteolytic cleavage by the viral protease. Cleavage of this peptide is required for TM to become fusogenic. In terms of processing, the CXXC motif is highly conserved across a broad range of retroviral envelope proteins. It is thought to participate in the formation of a labile disulfide bond possibly with the CX6CC motif present in the transmembrane protein. Isomerization of the intersubunit disulfide bond to an SU intrachain disulfide bond is thought to occur upon receptor recognition in order to allow membrane fusion. Post-translationally, the R-peptide is palmitoylated.

Its subcellular location is the virion membrane. It localises to the host cell membrane. Its function is as follows. The surface protein (SU) attaches the virus to the host cell by binding to its receptor. This interaction triggers the refolding of the transmembrane protein (TM) and is thought to activate its fusogenic potential by unmasking its fusion peptide. Fusion occurs at the host cell plasma membrane. Functionally, the transmembrane protein (TM) acts as a class I viral fusion protein. Under the current model, the protein has at least 3 conformational states: pre-fusion native state, pre-hairpin intermediate state, and post-fusion hairpin state. During viral and target cell membrane fusion, the coiled coil regions (heptad repeats) assume a trimer-of-hairpins structure, positioning the fusion peptide in close proximity to the C-terminal region of the ectodomain. The formation of this structure appears to drive apposition and subsequent fusion of viral and target cell membranes. Membranes fusion leads to delivery of the nucleocapsid into the cytoplasm. This Mus musculus (Mouse) protein is Envelope glycoprotein (env).